Consider the following 733-residue polypeptide: SWR1-complex protein 4 (733 aa).

Disordered regions lie at residues 1 to 34 (MTSH…RPNL) and 98 to 128 (PDGT…DSSF). Residues 146-217 (NTNLKHPDWT…DLKARYYEVA (72 aa)) form the SANT domain. Residues 247–299 (KQEQNRKRFAENTLKRSSDEAREEEALLLEIKRIMARTERFNEERRELYNRLD) are a coiled coil. A compositionally biased stretch (low complexity) spans 371–384 (AASRRESLAASSTA). Disordered regions lie at residues 371–488 (AASR…GSGP) and 564–733 (KKAE…KQKK). Basic and acidic residues-rich tracts occupy residues 387 to 423 (NDHH…DRHG), 463 to 484 (PERR…HDRL), 564 to 589 (KKAE…KGGE), and 610 to 653 (DDAK…KGEE). Residues 699–710 (GSSSGAGASSGA) are compositionally biased toward low complexity.

Belongs to the SWC4 family. In terms of assembly, component of the SWR1 chromatin-remodeling complex and of the NuA4 histone acetyltransferase complex.

It localises to the nucleus. Functionally, component of the SWR1 complex which mediates the ATP-dependent exchange of histone H2A for the H2A variant H2A.Z leading to transcriptional regulation of selected genes by chromatin remodeling. Component of the NuA4 histone acetyltransferase complex which is involved in transcriptional activation of selected genes principally by acetylation of nucleosomal histone H4 and H2A. The NuA4 complex is also involved in DNA repair. This is SWR1-complex protein 4 (crc-1) from Neurospora crassa (strain ATCC 24698 / 74-OR23-1A / CBS 708.71 / DSM 1257 / FGSC 987).